A 264-amino-acid chain; its full sequence is Small ribosomal subunit protein eS1 (264 aa).

Position 34 is an N6-acetyllysine; alternate (lysine 34). Residue lysine 34 forms a Glycyl lysine isopeptide (Lys-Gly) (interchain with G-Cter in SUMO2); alternate linkage. Position 56 is an N6-acetyllysine (lysine 56). Residue tyrosine 155 is modified to ADP-ribosyltyrosine. The tract at residues 233 to 264 is disordered; sequence GEGGSSGKAAGDETGAKVERADGYEPPVQESV. Position 237 is a phosphoserine (serine 237). Basic and acidic residues predominate over residues 242–255; sequence AGDETGAKVERADG. At lysine 249 the chain carries N6-acetyllysine; alternate. Residue lysine 249 forms a Glycyl lysine isopeptide (Lys-Gly) (interchain with G-Cter in SUMO2); alternate linkage. At tyrosine 256 the chain carries Phosphotyrosine. Residue serine 263 is modified to Phosphoserine.

Belongs to the eukaryotic ribosomal protein eS1 family. In terms of assembly, component of the small ribosomal subunit. Mature ribosomes consist of a small (40S) and a large (60S) subunit. The 40S subunit contains about 33 different proteins and 1 molecule of RNA (18S). The 60S subunit contains about 49 different proteins and 3 molecules of RNA (28S, 5.8S and 5S). Identified in a IGF2BP1-dependent mRNP granule complex containing untranslated mRNAs. Binds with high affinity to IPO4. Interacts with DDIT3. Part of the small subunit (SSU) processome, composed of more than 70 proteins and the RNA chaperone small nucleolar RNA (snoRNA) U3. Post-translationally, ADP-ribosylated at Tyr-155 by PARP1 in presence of HPF1.

The protein resides in the cytoplasm. It is found in the nucleus. Its subcellular location is the nucleolus. In terms of biological role, component of the small ribosomal subunit. The ribosome is a large ribonucleoprotein complex responsible for the synthesis of proteins in the cell. Part of the small subunit (SSU) processome, first precursor of the small eukaryotic ribosomal subunit. During the assembly of the SSU processome in the nucleolus, many ribosome biogenesis factors, an RNA chaperone and ribosomal proteins associate with the nascent pre-rRNA and work in concert to generate RNA folding, modifications, rearrangements and cleavage as well as targeted degradation of pre-ribosomal RNA by the RNA exosome. May play a role during erythropoiesis through regulation of transcription factor DDIT3. This is Small ribosomal subunit protein eS1 (Rps3a) from Mus musculus (Mouse).